The chain runs to 345 residues: Biotin synthase (345 aa).

The Radical SAM core domain maps to 49 to 276 (NQVQMSTLLS…ASFVRLSAGR (228 aa)). The [4Fe-4S] cluster site is built by cysteine 64, cysteine 68, and cysteine 71. Cysteine 108, cysteine 139, cysteine 199, and arginine 271 together coordinate [2Fe-2S] cluster.

Belongs to the radical SAM superfamily. Biotin synthase family. Homodimer. Requires [4Fe-4S] cluster as cofactor. The cofactor is [2Fe-2S] cluster.

It carries out the reaction (4R,5S)-dethiobiotin + (sulfur carrier)-SH + 2 reduced [2Fe-2S]-[ferredoxin] + 2 S-adenosyl-L-methionine = (sulfur carrier)-H + biotin + 2 5'-deoxyadenosine + 2 L-methionine + 2 oxidized [2Fe-2S]-[ferredoxin]. It participates in cofactor biosynthesis; biotin biosynthesis; biotin from 7,8-diaminononanoate: step 2/2. Functionally, catalyzes the conversion of dethiobiotin (DTB) to biotin by the insertion of a sulfur atom into dethiobiotin via a radical-based mechanism. In Nitrosococcus oceani (strain ATCC 19707 / BCRC 17464 / JCM 30415 / NCIMB 11848 / C-107), this protein is Biotin synthase.